We begin with the raw amino-acid sequence, 115 residues long: Evasin P1183 (115 aa).

The N-terminal stretch at 1 to 25 is a signal peptide; the sequence is MTRNWSFRVIFVSAMWCALLKFATL. Intrachain disulfides connect Cys-38–Cys-58, Cys-54–Cys-94, Cys-70–Cys-99, and Cys-89–Cys-108. 3 N-linked (GlcNAc...) asparagine glycosylation sites follow: Asn-45, Asn-72, and Asn-103.

The protein resides in the secreted. Functionally, salivary chemokine-binding protein which binds to host chemokine CCL2. The protein is Evasin P1183 of Amblyomma triste (Neotropical tick).